The following is a 2293-amino-acid chain: Protein Ycf2 B (2293 aa).

An ATP-binding site is contributed by glycine 1647–serine 1654.

Belongs to the Ycf2 family.

It is found in the plastid. The protein localises to the chloroplast stroma. Probable ATPase of unknown function. Its presence in a non-photosynthetic plant (Epifagus virginiana) and experiments in tobacco indicate that it has an essential function which is probably not related to photosynthesis. This Crucihimalaya wallichii (Rock-cress) protein is Protein Ycf2 B.